A 373-amino-acid polypeptide reads, in one-letter code: Probable protein phosphatase 2C 73 (373 aa).

Residues 61–354 (LASLFSKRGE…DDMSVVCLFL (294 aa)) enclose the PPM-type phosphatase domain. Positions 97, 98, 299, and 345 each coordinate Mn(2+).

The protein belongs to the PP2C family. Mg(2+) is required as a cofactor. Requires Mn(2+) as cofactor.

The catalysed reaction is O-phospho-L-seryl-[protein] + H2O = L-seryl-[protein] + phosphate. The enzyme catalyses O-phospho-L-threonyl-[protein] + H2O = L-threonyl-[protein] + phosphate. The chain is Probable protein phosphatase 2C 73 (PPC6-7) from Arabidopsis thaliana (Mouse-ear cress).